A 351-amino-acid polypeptide reads, in one-letter code: MNSSSSRSSMSMPMPMDMPQMHMGMNNNCEMNQMMHPIPNFPMKWEPCTPPDEKPHPSMLFPPLSGIFNQSRHSSTGEDYHGSSSGSPSSSLSSPNEFKDEPLGLDVHFGNSLFNAPFSPSATSSHSPSSYGMMHGSHSMASHQLHQQQLSPLPSVAHFSHSHHLQHHVVQHPSQASLQMNMNQIFSGPSHQYASSSVPHTFLFKDSTIYEGMGGMGLAAAQQQLKARNKMHEMAIRQHLITDQNITANGDLVLSAEERRTLVQEGYSIPQKYPLTKSEEESLKIVRRKIKNKLSAQESRRKRKEYIDALEGRLHCFSEENKSLKKQVHQLEASNRDLQQKLHQYESKEKM.

Disordered stretches follow at residues 46–104 and 119–149; these read EPCT…EPLG and SPSA…HQQQ. Residues 82–95 are compositionally biased toward low complexity; that stretch reads GSSSGSPSSSLSSP. The 64-residue stretch at 282 to 345 folds into the bZIP domain; it reads SLKIVRRKIK…RDLQQKLHQY (64 aa). The interval 284–304 is basic motif; the sequence is KIVRRKIKNKLSAQESRRKRK. The segment at 307 to 314 is leucine-zipper; sequence IDALEGRL.

Belongs to the bZIP family.

The protein resides in the nucleus. Its function is as follows. Transcription factor. Plays a role in regulating the developmentally arrested larval state known as dauer, when induced by long-term exposure to the Gram-negative bacterium P.aeruginosa PAO1, but dispensable for dauer formation induced by starvation. Involved in regulating expression of microRNA mir-243, during long-term exposure to P.aeruginosa PAO1. This chain is CREB homolog crh-2, found in Caenorhabditis elegans.